Consider the following 344-residue polypeptide: MSDNVGLSTPRGSGTSGYVQRNLAHFRPRDNYQSYPPKDFDSLKHQPRQPDKGLLEHDRKREVEVKVFELRDKLEEEGVEEDEIETRCDELRRKLLAEMERNQNSRGAPTGPRKNLKMHQVHELADAKIKESERLRQALKISRDYQEGSHWKKQEERLKGALEREANGDSSSMPPPPAPSGPSGGNDRGGDRDRGRGRGFGRRDRDEGRLNSRERRAPPRDWDRPPTPRGRGGRGGRGGRDREVDSYRGAAGRDRSRSRSPIRERSRTRSPVRDTGRSRSPVSERSLSRSRSRSRSYSRSRSPPRRRAADSQDRSLSRSRSRSYSRSPDRDRYREKYRDRDNRD.

The segment covering 1–19 (MSDNVGLSTPRGSGTSGYV) has biased composition (polar residues). 2 disordered regions span residues 1-58 (MSDN…LEHD) and 98-344 (EMER…DNRD). Over residues 38–58 (KDFDSLKHQPRQPDKGLLEHD) the composition is skewed to basic and acidic residues. The region spanning 55-98 (LEHDRKREVEVKVFELRDKLEEEGVEEDEIETRCDELRRKLLAE) is the CWF21 domain. Residues 69-105 (ELRDKLEEEGVEEDEIETRCDELRRKLLAEMERNQNS) adopt a coiled-coil conformation. Composition is skewed to basic and acidic residues over residues 120–167 (QVHE…REAN), 188–226 (RGGD…DRPP), and 238–277 (GGRD…DTGR). Residues 288 to 306 (SRSRSRSRSYSRSRSPPRR) show a composition bias toward basic residues. 2 stretches are compositionally biased toward basic and acidic residues: residues 307 to 316 (RAADSQDRSL) and 327 to 344 (SPDR…DNRD).

It belongs to the CWC21 family. As to quaternary structure, associates with the NTC complex (or PRP19-associated complex). The NTC complex associates with the spliceosome after the release of the U1 and U4 snRNAs and forms the CWC spliceosome subcomplex reminiscent of a late-stage spliceosome.

The protein resides in the cytoplasm. The protein localises to the nucleus. Involved in pre-mRNA splicing. May function at or prior to the first catalytic step of splicing at the catalytic center of the spliceosome. May do so by stabilizing the catalytic center or the position of the RNA substrate. This is Pre-mRNA-splicing factor cwc-21 (cwc-21) from Neurospora crassa (strain ATCC 24698 / 74-OR23-1A / CBS 708.71 / DSM 1257 / FGSC 987).